The primary structure comprises 425 residues: tRNA(Ile)-lysidine synthase (425 aa).

27–32 (SGGLDS) lines the ATP pocket.

Belongs to the tRNA(Ile)-lysidine synthase family.

The protein resides in the cytoplasm. It carries out the reaction cytidine(34) in tRNA(Ile2) + L-lysine + ATP = lysidine(34) in tRNA(Ile2) + AMP + diphosphate + H(+). In terms of biological role, ligates lysine onto the cytidine present at position 34 of the AUA codon-specific tRNA(Ile) that contains the anticodon CAU, in an ATP-dependent manner. Cytidine is converted to lysidine, thus changing the amino acid specificity of the tRNA from methionine to isoleucine. This chain is tRNA(Ile)-lysidine synthase, found in Streptococcus pneumoniae (strain Hungary19A-6).